A 591-amino-acid polypeptide reads, in one-letter code: L-fucose isomerase (591 aa).

Catalysis depends on proton acceptor residues glutamate 337 and aspartate 361. Mn(2+) is bound by residues glutamate 337, aspartate 361, and histidine 528.

The protein belongs to the L-fucose isomerase family. Homohexamer. It depends on Mn(2+) as a cofactor.

The protein localises to the cytoplasm. The enzyme catalyses L-fucose = L-fuculose. It participates in carbohydrate degradation; L-fucose degradation; L-lactaldehyde and glycerone phosphate from L-fucose: step 1/3. Converts the aldose L-fucose into the corresponding ketose L-fuculose. The polypeptide is L-fucose isomerase (Salmonella typhi).